Here is a 376-residue protein sequence, read N- to C-terminus: Chaperone protein DnaJ 2 (376 aa).

The J domain maps to 8–72; sequence DYYEILGVPR…EKRKLYDMYG (65 aa). A CR-type zinc finger spans residues 143-219; it reads GTTVPIEVER…CTGRGYGLVK (77 aa). Cysteine 156, cysteine 159, cysteine 172, cysteine 175, cysteine 194, cysteine 197, cysteine 207, and cysteine 210 together coordinate Zn(2+). 4 CXXCXGXG motif repeats span residues 156-163, 172-179, 194-201, and 207-214; these read CSACGGTG, CPTCGGRG, CPTCGGEG, and CHACTGRG.

It belongs to the DnaJ family. Homodimer. The cofactor is Zn(2+).

It localises to the cytoplasm. Participates actively in the response to hyperosmotic and heat shock by preventing the aggregation of stress-denatured proteins and by disaggregating proteins, also in an autonomous, DnaK-independent fashion. Unfolded proteins bind initially to DnaJ; upon interaction with the DnaJ-bound protein, DnaK hydrolyzes its bound ATP, resulting in the formation of a stable complex. GrpE releases ADP from DnaK; ATP binding to DnaK triggers the release of the substrate protein, thus completing the reaction cycle. Several rounds of ATP-dependent interactions between DnaJ, DnaK and GrpE are required for fully efficient folding. Also involved, together with DnaK and GrpE, in the DNA replication of plasmids through activation of initiation proteins. This is Chaperone protein DnaJ 2 from Aquifex aeolicus (strain VF5).